We begin with the raw amino-acid sequence, 368 residues long: Zinc finger protein 24 (368 aa).

K22 participates in a covalent cross-link: Glycyl lysine isopeptide (Lys-Gly) (interchain with G-Cter in SUMO2). K27 participates in a covalent cross-link: Glycyl lysine isopeptide (Lys-Gly) (interchain with G-Cter in SUMO1); alternate. K27 is covalently cross-linked (Glycyl lysine isopeptide (Lys-Gly) (interchain with G-Cter in SUMO2); alternate). The 83-residue stretch at 52–134 folds into the SCAN box domain; it reads RQRFRQFGYQ…AVLEDLESEL (83 aa). A phosphoserine mark is found at S132 and S142. Residues K147, K177, and K236 each participate in a glycyl lysine isopeptide (Lys-Gly) (interchain with G-Cter in SUMO2) cross-link. The segment at 251-273 adopts a C2H2-type 1 zinc-finger fold; it reads HICDECGKHFSQGSALILHQRIH. Residues 251–301 are necessary and sufficient for nuclear localization; that stretch reads HICDECGKHFSQGSALILHQRIHSGEKPYGCVECGKAFSRSSILVQHQRVH. S274 is modified (phosphoserine). Residues K277 and K286 each participate in a glycyl lysine isopeptide (Lys-Gly) (interchain with G-Cter in SUMO2) cross-link. C2H2-type zinc fingers lie at residues 279 to 301, 307 to 329, and 335 to 357; these read YGCVECGKAFSRSSILVQHQRVH, YKCLECGKAFSQNSGLINHQRIH, and YECVQCGKSYSQSSNLFRHQRRH. A Phosphoserine modification is found at S292. Y335 carries the phosphotyrosine modification. Glycyl lysine isopeptide (Lys-Gly) (interchain with G-Cter in SUMO2) cross-links involve residues K361 and K367.

Belongs to the krueppel C2H2-type zinc-finger protein family. Post-translationally, sumoylated. Widely expressed with highest levels in heart, brain, liver, skeletal muscle, kidney and testis and very low levels in spleen and lung.

It is found in the nucleus. Transcription factor required for myelination of differentiated oligodendrocytes. Required for the conversion of oligodendrocytes from the premyelinating to the myelinating state. In the developing central nervous system (CNS), involved in the maintenance in the progenitor stage by promoting the cell cycle. Specifically binds to the 5'-TCAT-3' DNA sequence. Has transcription repressor activity in vitro. In Mus musculus (Mouse), this protein is Zinc finger protein 24.